Here is a 346-residue protein sequence, read N- to C-terminus: Phosphate-binding protein PstS (346 aa).

Residues 1-25 (MKVMRTTVATVVAATLSMSAFSVFA) form the signal peptide. Phosphate-binding positions include 34 to 36 (ATF), Ser-63, Asp-81, and 164 to 166 (SGT).

This sequence belongs to the PstS family. In terms of assembly, the complex is composed of two ATP-binding proteins (PstB), two transmembrane proteins (PstC and PstA) and a solute-binding protein (PstS).

The protein resides in the periplasm. In terms of biological role, part of the ABC transporter complex PstSACB involved in phosphate import. This chain is Phosphate-binding protein PstS (pstS), found in Escherichia coli (strain K12).